A 385-amino-acid chain; its full sequence is tRNA (guanine-N(7)-)-methyltransferase non-catalytic subunit wuho (385 aa).

WD repeat units follow at residues 68 to 108 (KVEV…AKLL), 155 to 194 (GHLS…DIHS), and 198 to 236 (GHKE…ELLH).

This sequence belongs to the WD repeat TRM82 family. As to quaternary structure, forms a heterodimer with the catalytic subunit Mettl1. Interacts with mei-P26 and weakly interacts with bgcn; required for the function or formation of the mei-P26-bgcn-bam-sxl complex. Interacts with nanos; may be involved in mei-P26-dependent derepression of the BMP signaling pathway. Interacts with Myc; the interaction may be mediated by mei-P26 and may be involved in the regulation of ribosome biogenesis. As to expression, in testis, it is present at high level in hub cells, a niche for germline stem cells of testis. Ubiquitously expressed in all testicular cells throughout spermatogenesis. Ubiquitously expressed in all germline and somatic cells of the ovary.

The protein resides in the nucleus. Its subcellular location is the cytoplasm. It functions in the pathway tRNA modification; N(7)-methylguanine-tRNA biosynthesis. Functionally, required for the Mettl1-dependent formation of N(7)-methylguanine at position 46 (m7G46) in tRNA. In the Mettl1-wuho methyltransferase complex, it is required to stabilize and induce conformational changes of the catalytic subunit. Required for binding of nanos mRNA and repression of translation by the mei-P26-bgcn-bam-sxl complex. May cooperate with mei-P26 and nanos to derepress the BMP signaling pathway. May cooperate with mei-P26 to suppress expression of a subset of microRNAs. May cooperate with mei-P26 to regulate bam expression levels in germline cells during gametogenesis. Required to promote mitosis to meiosis transition during gametogenesis. May regulate germline cell division in part by regulating ribosome biogenesis. The chain is tRNA (guanine-N(7)-)-methyltransferase non-catalytic subunit wuho from Drosophila grimshawi (Hawaiian fruit fly).